A 272-amino-acid chain; its full sequence is Cholesterol 25-hydroxylase (272 aa).

Asn5 carries N-linked (GlcNAc...) asparagine glycosylation. A run of 3 helical transmembrane segments spans residues 38–58, 84–104, and 121–141; these read FFPV…FVVL, LLPC…PVTL, and LLLL…EFFV. One can recognise a Fatty acid hydroxylase domain in the interval 129–263; it reads LFCLLLFDME…FTHWDKILGT (135 aa). Residues 142 to 146 carry the Histidine box-1 motif; that stretch reads WHLLH. Positions 157–161 match the Histidine box-2 motif; the sequence is HKVHH. N-linked (GlcNAc...) asparagine glycans are attached at residues Asn163 and Asn189. The Histidine box-3 motif lies at 238–244; it reads HHDLHHS.

It belongs to the sterol desaturase family. Fe cation serves as cofactor. N-glycosylated.

The protein resides in the endoplasmic reticulum membrane. It catalyses the reaction cholesterol + AH2 + O2 = 25-hydroxycholesterol + A + H2O. It carries out the reaction cholesterol + NADPH + O2 + H(+) = 25-hydroxycholesterol + NADP(+) + H2O. In terms of biological role, catalyzes the formation of 25-hydroxycholesterol from cholesterol, leading to repress cholesterol biosynthetic enzymes. Plays a key role in cell positioning and movement in lymphoid tissues: 25-hydroxycholesterol is an intermediate in biosynthesis of 7-alpha,25-dihydroxycholesterol (7-alpha,25-OHC), an oxysterol that acts as a ligand for the G protein-coupled receptor GPR183/EBI2, a chemotactic receptor for a number of lymphoid cells. May play an important role in regulating lipid metabolism by synthesizing a corepressor that blocks sterol regulatory element binding protein (SREBP) processing. As an interferon-stimulated gene, has broad antiviral activities against a wide range of enveloped viruses, such as vesicular stomatitis virus (VSV) and SARS coronavirus-2 (SARS-CoV-2). Its product, 25-hydroxycholesterol, activates the ER-localized enzyme ACAT to induce internalization of accessible cholesterol on the plasma membrane and restricts SARS-CoV-2 S protein-mediated fusion which inhibits virus replication. In testis, production of 25-hydroxycholesterol by macrophages plays a role in Leydig cell differentiation. Required to restrain inflammation in macrophages: production of 25-hydroxycholesterol protects macrophages from cholesterol overload, thereby preventing mitochondrial DNA release and subsequent activation of the AIM2 inflammasome. The chain is Cholesterol 25-hydroxylase from Homo sapiens (Human).